The following is a 136-amino-acid chain: UPF0225 protein Pnap_0466 (136 aa).

The protein belongs to the UPF0225 family.

The chain is UPF0225 protein Pnap_0466 from Polaromonas naphthalenivorans (strain CJ2).